A 478-amino-acid polypeptide reads, in one-letter code: 3-isopropylmalate dehydratase large subunit (478 aa).

3 residues coordinate [4Fe-4S] cluster: C347, C407, and C410.

Belongs to the aconitase/IPM isomerase family. LeuC type 1 subfamily. In terms of assembly, heterodimer of LeuC and LeuD. Requires [4Fe-4S] cluster as cofactor.

It catalyses the reaction (2R,3S)-3-isopropylmalate = (2S)-2-isopropylmalate. Its pathway is amino-acid biosynthesis; L-leucine biosynthesis; L-leucine from 3-methyl-2-oxobutanoate: step 2/4. Its function is as follows. Catalyzes the isomerization between 2-isopropylmalate and 3-isopropylmalate, via the formation of 2-isopropylmaleate. The sequence is that of 3-isopropylmalate dehydratase large subunit from Prochlorococcus marinus (strain MIT 9303).